The following is a 179-amino-acid chain: MSRIGKKPIAVPSGVEITIDGQHVSVKGPKGTLTHTVAEPITVTRGEDGQLEVTRPNDERRNRSLHGLTRTLIANMIEGVTKGYEKKMEIFGVGYRVQAKGSNLEFALGYSHPVPVEAPEGITFAVESPTKFSVSGIDKQKVGQISAVIHGLRKPDPYKGKGIRYAGEVVRRKVGKTGK.

Belongs to the universal ribosomal protein uL6 family. Part of the 50S ribosomal subunit.

Its function is as follows. This protein binds to the 23S rRNA, and is important in its secondary structure. It is located near the subunit interface in the base of the L7/L12 stalk, and near the tRNA binding site of the peptidyltransferase center. This is Large ribosomal subunit protein uL6 from Nocardia farcinica (strain IFM 10152).